A 323-amino-acid polypeptide reads, in one-letter code: DNA-directed RNA polymerase subunit alpha 1 (323 aa).

Residues 1–228 are alpha N-terminal domain (alpha-NTD); sequence MSNNNSKLEF…EQISVFVSLR (228 aa). Residues 244-323 are alpha C-terminal domain (alpha-CTD); the sequence is IDPILLKPID…DNFRELVEGK (80 aa).

This sequence belongs to the RNA polymerase alpha chain family. In terms of assembly, homodimer. The RNAP catalytic core consists of 2 alpha, 1 beta, 1 beta' and 1 omega subunit. When a sigma factor is associated with the core the holoenzyme is formed, which can initiate transcription.

The enzyme catalyses RNA(n) + a ribonucleoside 5'-triphosphate = RNA(n+1) + diphosphate. Its function is as follows. DNA-dependent RNA polymerase catalyzes the transcription of DNA into RNA using the four ribonucleoside triphosphates as substrates. The chain is DNA-directed RNA polymerase subunit alpha 1 from Francisella tularensis subsp. tularensis (strain FSC 198).